Reading from the N-terminus, the 132-residue chain is Holo-[acyl-carrier-protein] synthase (132 aa).

Mg(2+)-binding residues include Asp-8 and Glu-62.

It belongs to the P-Pant transferase superfamily. AcpS family. Mg(2+) is required as a cofactor.

Its subcellular location is the cytoplasm. The enzyme catalyses apo-[ACP] + CoA = holo-[ACP] + adenosine 3',5'-bisphosphate + H(+). In terms of biological role, transfers the 4'-phosphopantetheine moiety from coenzyme A to a Ser of acyl-carrier-protein. This chain is Holo-[acyl-carrier-protein] synthase, found in Methylibium petroleiphilum (strain ATCC BAA-1232 / LMG 22953 / PM1).